Here is a 342-residue protein sequence, read N- to C-terminus: Probable dual-specificity RNA methyltransferase RlmN (342 aa).

Residue Glu91 is the Proton acceptor of the active site. The Radical SAM core domain maps to 97–327; that stretch reads YKHGNSICVS…TTIRREMGAD (231 aa). A disulfide bridge links Cys104 with Cys332. Cys111, Cys115, and Cys118 together coordinate [4Fe-4S] cluster. Residues 158–159, Ser190, 213–215, and Asn289 contribute to the S-adenosyl-L-methionine site; these read GE and SLH. The S-methylcysteine intermediate role is filled by Cys332.

It belongs to the radical SAM superfamily. RlmN family. It depends on [4Fe-4S] cluster as a cofactor.

It is found in the cytoplasm. It catalyses the reaction adenosine(2503) in 23S rRNA + 2 reduced [2Fe-2S]-[ferredoxin] + 2 S-adenosyl-L-methionine = 2-methyladenosine(2503) in 23S rRNA + 5'-deoxyadenosine + L-methionine + 2 oxidized [2Fe-2S]-[ferredoxin] + S-adenosyl-L-homocysteine. The catalysed reaction is adenosine(37) in tRNA + 2 reduced [2Fe-2S]-[ferredoxin] + 2 S-adenosyl-L-methionine = 2-methyladenosine(37) in tRNA + 5'-deoxyadenosine + L-methionine + 2 oxidized [2Fe-2S]-[ferredoxin] + S-adenosyl-L-homocysteine. Its function is as follows. Specifically methylates position 2 of adenine 2503 in 23S rRNA and position 2 of adenine 37 in tRNAs. The polypeptide is Probable dual-specificity RNA methyltransferase RlmN (Clostridium botulinum (strain Langeland / NCTC 10281 / Type F)).